Here is a 446-residue protein sequence, read N- to C-terminus: NAD(P)H sulfur oxidoreductase (CoA-dependent) (446 aa).

17 to 18 contributes to the FAD binding site; sequence AA. Arginine 28 contributes to the CoA binding site. Residues 39-40 and 46-48 each bind FAD; these read EA and HAP. CoA contacts are provided by residues 45 to 49, 66 to 67, and arginine 76; these read SHAPC and HY. Cysteine 49 serves as the catalytic Redox-active. Valine 86, aspartate 284, and alanine 302 together coordinate FAD. CoA is bound by residues asparagine 306 and lysine 362. Tyrosine 426 contacts FAD. The CoA site is built by tryptophan 434 and arginine 442.

Belongs to the class-III pyridine nucleotide-disulfide oxidoreductase family. FAD is required as a cofactor.

It carries out the reaction hydrogen sulfide + NADP(+) = sulfur + NADPH. It catalyses the reaction hydrogen sulfide + NAD(+) = sulfur + NADH. Functionally, catalyzes the CoA-dependent reduction of elemental sulfur (S(0)) to produce hydrogen sulfide. The protein is NAD(P)H sulfur oxidoreductase (CoA-dependent) of Pyrococcus abyssi (strain GE5 / Orsay).